A 227-amino-acid chain; its full sequence is Transmembrane emp24 domain-containing protein 1 (227 aa).

An N-terminal signal peptide occupies residues 1–23 (MMAAGAALALALWLLMPPVEVGG). Residues 24-194 (AGPPPIQDGE…LQEGNLERVN (171 aa)) lie on the Extracellular side of the membrane. One can recognise a GOLD domain in the interval 43-125 (KQCFYQSAPA…EKLVFFELIF (83 aa)). Residues 145 to 170 (EMLDVKMEDIKESIETMRTRLERSIQ) are a coiled coil. Residues 195–215 (FWSAVNVAVLLLVAVLQVCTL) form a helical membrane-spanning segment. Over 216–227 (KRFFQDKRPVPT) the chain is Cytoplasmic. The COPII vesicle coat-binding motif lies at 218–219 (FF). The COPI vesicle coat-binding signature appears at 218 to 227 (FFQDKRPVPT).

Belongs to the EMP24/GP25L family. In terms of assembly, homodimer in endoplasmic reticulum, endoplasmic reticulum-Golgi intermediate compartment and cis-Golgi network. Interacts with IL1RL1. Interacts with RNF26; this interaction is important to modulate innate immune signaling through the cGAS-STING pathway. Widely expressed.

It is found in the cell membrane. It localises to the endoplasmic reticulum membrane. The protein localises to the golgi apparatus. Its subcellular location is the cis-Golgi network membrane. The protein resides in the endoplasmic reticulum-Golgi intermediate compartment membrane. In terms of biological role, potential role in vesicular protein trafficking, mainly in the early secretory pathway. May act as a cargo receptor at the lumenal side for incorporation of secretory cargo molecules into transport vesicles and may be involved in vesicle coat formation at the cytoplasmic side. Plays a positive role in IL-33-mediated IL-8 and IL-6 production by interacting with interleukin-33 receptor IL1RL1. Also plays a role in the modulation of innate immune signaling through the cGAS-STING pathway by interacting with RNF26. This Homo sapiens (Human) protein is Transmembrane emp24 domain-containing protein 1 (TMED1).